The sequence spans 499 residues: Tyrosine-protein kinase Blk (499 aa).

Positions 1 to 34 are disordered; that stretch reads MGLLSSKRQVSEKGKGWSPVKIRTQDKAPPPLPP. Glycine 2 carries the N-myristoyl glycine lipid modification. The SH3 domain maps to 52-112; it reads EEERFVVALF…PSNFVAPVET (61 aa). The 97-residue stretch at 118-214 folds into the SH2 domain; sequence WFFRTISRKD…GLCQKLTLPC (97 aa). The 254-residue stretch at 235-488 folds into the Protein kinase domain; the sequence is LKLVRKLGSG…FLQSVLEDFY (254 aa). ATP is bound by residues 241 to 249 and lysine 263; that span reads LGSGQFGEV. The Proton acceptor role is filled by aspartate 354. Tyrosine 383 is modified (phosphotyrosine; by autocatalysis).

It belongs to the protein kinase superfamily. Tyr protein kinase family. SRC subfamily. In terms of assembly, interacts with CBL (via SH2 domain). Interacts with CD79A and CD79B (via SH2 domain). Post-translationally, phosphorylated on tyrosine residues after antibody-mediated surface engagement of the B-cell antigen receptor (BCR). In terms of processing, ubiquitination of activated BLK by the UBE3A ubiquitin protein ligase leads to its degradation by the ubiquitin-proteasome pathway. In terms of tissue distribution, expressed in immature Vgamma2 gamma-delta T-cells (at protein level). Expressed in the B-cell lineage.

It localises to the cell membrane. The catalysed reaction is L-tyrosyl-[protein] + ATP = O-phospho-L-tyrosyl-[protein] + ADP + H(+). With respect to regulation, antibody-mediated surface engagement of the B-cell antigen receptor (BCR) which results in the phosphorylation of BLK on tyrosine residues, stimulates the enzymatic activity. Functionally, non-receptor tyrosine kinase involved in B-lymphocyte development, differentiation and signaling. B-cell receptor (BCR) signaling requires a tight regulation of several protein tyrosine kinases and phosphatases, and associated coreceptors. Binding of antigen to the B-cell antigen receptor (BCR) triggers signaling that ultimately leads to B-cell activation. Signaling through BLK plays an important role in transmitting signals through surface immunoglobulins and supports the pro-B to pre-B transition, as well as the signaling for growth arrest and apoptosis downstream of B-cell receptor. Specifically binds and phosphorylates CD79A at 'Tyr-188'and 'Tyr-199', as well as CD79B at 'Tyr-196' and 'Tyr-207'. Also phosphorylates the immunoglobulin G receptor FCGR2. With FYN and LYN, plays an essential role in pre-B-cell receptor (pre-BCR)-mediated NF-kappa-B activation. Also contributes to BTK activation by indirectly stimulating BTK intramolecular autophosphorylation. In pancreatic islets, acts as a modulator of beta-cells function through the up-regulation of PDX1 and NKX6-1 and consequent stimulation of insulin secretion in response to glucose. Phosphorylates CGAS, promoting retention of CGAS in the cytosol. This chain is Tyrosine-protein kinase Blk (Blk), found in Mus musculus (Mouse).